Reading from the N-terminus, the 500-residue chain is NAD(P)H-quinone oxidoreductase chain 4, chloroplastic (500 aa).

Transmembrane regions (helical) follow at residues 4–24, 37–57, 84–104, 111–129, 134–154, 167–187, 208–228, 242–262, 272–292, 305–325, 330–350, 386–406, 416–436, and 462–482; these read FPWL…ILFL, LCIC…HFQL, GISI…TLAA, SRVF…IGPF, LLLF…LLSM, FILY…GICL, ALEM…SPII, HYST…YGLV, AHSI…IYAA, IAYS…SIND, GAIL…FLAG, LALP…GILT, ILIT…SLSM, and FFVS…PDFV.

Belongs to the complex I subunit 4 family.

Its subcellular location is the plastid. It localises to the chloroplast thylakoid membrane. It catalyses the reaction a plastoquinone + NADH + (n+1) H(+)(in) = a plastoquinol + NAD(+) + n H(+)(out). It carries out the reaction a plastoquinone + NADPH + (n+1) H(+)(in) = a plastoquinol + NADP(+) + n H(+)(out). This is NAD(P)H-quinone oxidoreductase chain 4, chloroplastic from Morus indica (Mulberry).